The chain runs to 109 residues: Phosphoribosyl-ATP pyrophosphatase (109 aa).

It belongs to the PRA-PH family.

The protein localises to the cytoplasm. It carries out the reaction 1-(5-phospho-beta-D-ribosyl)-ATP + H2O = 1-(5-phospho-beta-D-ribosyl)-5'-AMP + diphosphate + H(+). Its pathway is amino-acid biosynthesis; L-histidine biosynthesis; L-histidine from 5-phospho-alpha-D-ribose 1-diphosphate: step 2/9. The polypeptide is Phosphoribosyl-ATP pyrophosphatase (Azorhizobium caulinodans (strain ATCC 43989 / DSM 5975 / JCM 20966 / LMG 6465 / NBRC 14845 / NCIMB 13405 / ORS 571)).